A 386-amino-acid polypeptide reads, in one-letter code: Beta-citrylglutamate synthase B (386 aa).

An ATP-grasp domain is found at F119–A304. ATP-binding positions include K158, Q193–D203, and R219. Mg(2+) is bound by residues D264, E277, and N279. Residues D264, E277, and N279 each contribute to the Mn(2+) site. The tract at residues A325–E359 is disordered. The span at S338–D352 shows a compositional bias: low complexity.

The protein belongs to the RimK family. Requires Mg(2+) as cofactor. Mn(2+) serves as cofactor.

The protein localises to the cytoplasm. The catalysed reaction is citrate + L-glutamate + ATP = beta-citrylglutamate + ADP + phosphate + H(+). It catalyses the reaction N-acetyl-L-aspartate + L-glutamate + ATP = N-acetyl-L-aspartyl-L-glutamate + ADP + phosphate + H(+). Its function is as follows. Catalyzes the synthesis of beta-citryl-L-glutamate and N-acetyl-L-aspartyl-L-glutamate. Beta-citryl-L-glutamate is synthesized more efficiently than N-acetyl-L-aspartyl-L-glutamate. The sequence is that of Beta-citrylglutamate synthase B (RIMKLB) from Homo sapiens (Human).